A 209-amino-acid chain; its full sequence is Uracil phosphoribosyltransferase (209 aa).

5-phospho-alpha-D-ribose 1-diphosphate contacts are provided by residues R79, R104, and D131–S139. Uracil-binding positions include I194 and G199–A201. D200 serves as a coordination point for 5-phospho-alpha-D-ribose 1-diphosphate.

The protein belongs to the UPRTase family. It depends on Mg(2+) as a cofactor.

The catalysed reaction is UMP + diphosphate = 5-phospho-alpha-D-ribose 1-diphosphate + uracil. It functions in the pathway pyrimidine metabolism; UMP biosynthesis via salvage pathway; UMP from uracil: step 1/1. Allosterically activated by GTP. Its function is as follows. Catalyzes the conversion of uracil and 5-phospho-alpha-D-ribose 1-diphosphate (PRPP) to UMP and diphosphate. The chain is Uracil phosphoribosyltransferase from Rhizobium rhizogenes (strain K84 / ATCC BAA-868) (Agrobacterium radiobacter).